The sequence spans 174 residues: MGKITFYEDRDFQGRCYNCISDCPNLRVYFSRCNSIRVDSGCWMLYERPNYQGHQYFLRRGKYPDYQHWMGLSDSVQSCRIIPHTSSHKLRLYERDDYRGLMSELTDDCACVPELFRLPEIYSLHVLEGCWVLYEMPNYRGRQYLLRPGDYRRYHDWGGADAKVGSLRRVTDLY.

2 consecutive Beta/gamma crystallin 'Greek key' domains span residues 2–40 (GKIT…RVDS) and 41–83 (GCWM…RIIP). A connecting peptide region spans residues 84-87 (HTSS). 2 consecutive Beta/gamma crystallin 'Greek key' domains span residues 88–128 (HKLR…HVLE) and 129–171 (GCWV…RRVT).

It belongs to the beta/gamma-crystallin family. Monomer.

Crystallins are the dominant structural components of the vertebrate eye lens. The protein is Gamma-crystallin A (CRYGA) of Homo sapiens (Human).